Reading from the N-terminus, the 310-residue chain is tRNA-cytidine(32) 2-sulfurtransferase (310 aa).

Positions 47–52 (SGGKDS) match the PP-loop motif motif. Residues cysteine 122, cysteine 125, and cysteine 213 each coordinate [4Fe-4S] cluster.

Belongs to the TtcA family. In terms of assembly, homodimer. Mg(2+) serves as cofactor. Requires [4Fe-4S] cluster as cofactor.

The protein localises to the cytoplasm. The enzyme catalyses cytidine(32) in tRNA + S-sulfanyl-L-cysteinyl-[cysteine desulfurase] + AH2 + ATP = 2-thiocytidine(32) in tRNA + L-cysteinyl-[cysteine desulfurase] + A + AMP + diphosphate + H(+). It participates in tRNA modification. In terms of biological role, catalyzes the ATP-dependent 2-thiolation of cytidine in position 32 of tRNA, to form 2-thiocytidine (s(2)C32). The sulfur atoms are provided by the cysteine/cysteine desulfurase (IscS) system. The chain is tRNA-cytidine(32) 2-sulfurtransferase from Haemophilus influenzae (strain 86-028NP).